A 307-amino-acid chain; its full sequence is NAD kinase (307 aa).

Asp78 (proton acceptor) is an active-site residue. NAD(+) is bound by residues 78–79 (DG), His83, 154–155 (NE), Arg165, Arg182, Asp184, and Gln255.

This sequence belongs to the NAD kinase family. The cofactor is a divalent metal cation.

The protein resides in the cytoplasm. It carries out the reaction NAD(+) + ATP = ADP + NADP(+) + H(+). Functionally, involved in the regulation of the intracellular balance of NAD and NADP, and is a key enzyme in the biosynthesis of NADP. Catalyzes specifically the phosphorylation on 2'-hydroxyl of the adenosine moiety of NAD to yield NADP. The protein is NAD kinase of Halorhodospira halophila (strain DSM 244 / SL1) (Ectothiorhodospira halophila (strain DSM 244 / SL1)).